Here is an 893-residue protein sequence, read N- to C-terminus: DNA endonuclease RBBP8 (893 aa).

The interval 22 to 45 (ELWTKLKEYHDKEVQGLQVKVTKL) is essential for binding to the MRN complex and for RPA focus formation on DNA damage. Residues 35-84 (VQGLQVKVTKLKKERILDAQRLEEFFTKNQQLRDQQKVLQETIKILEDRL) are a coiled coil. Residues 45–160 (LKKERILDAQ…AELACEENII (116 aa)) are required for interaction with LMO4, probably by stabilizing the interaction through RPPB8 dimerization. Glycyl lysine isopeptide (Lys-Gly) (interchain with G-Cter in SUMO2) cross-links involve residues K62 and K115. Residues 117–138 (ITELMNEKNTLQEENKKLSEQL) are a coiled coil. K193 participates in a covalent cross-link: Glycyl lysine isopeptide (Lys-Gly) (interchain with G-Cter in SUMO2). A phosphoserine mark is found at S233 and S276. Over residues 296–307 (MESARSKEDSLR) the composition is skewed to basic and acidic residues. Residues 296 to 324 (MESARSKEDSLRFSDSASKTPPQEFTTRA) are disordered. The segment covering 308-324 (FSDSASKTPPQEFTTRA) has biased composition (polar residues). Position 315 is a phosphothreonine (T315). Phosphoserine occurs at positions 325, 326, and 348. Glycyl lysine isopeptide (Lys-Gly) (interchain with G-Cter in SUMO2) cross-links involve residues K359 and K377. S378 carries the phosphoserine modification. Glycyl lysine isopeptide (Lys-Gly) (interchain with G-Cter in SUMO2) cross-links involve residues K394, K403, K409, and K437. Positions 489-493 (PLDLS) match the PXDLS motif motif. Residues 508–556 (NETSKNKLKQATIYEALKPIPKGSSSGRKALSGDCMPAKDSWETYCLQP) are damage-recruitment motif. K525 participates in a covalent cross-link: Glycyl lysine isopeptide (Lys-Gly) (interchain with G-Cter in SUMO2); alternate. Glycyl lysine isopeptide (Lys-Gly) (interchain with G-Cter in SUMO2) cross-links involve residues K529, K570, and K576. A Glycyl lysine isopeptide (Lys-Gly) (interchain with G-Cter in SUMO2); alternate cross-link involves residue K602. Residues K611, K636, and K638 each participate in a glycyl lysine isopeptide (Lys-Gly) (interchain with G-Cter in SUMO2) cross-link. A required for interaction with LMO4, probably by making physical contact with LMO4 region spans residues 639 to 683 (ALPSNQDTSFENIQWSVDPGADLSQYKMDVTVIDTKDSSHSRLGG). S662 is subject to Phosphoserine; by ATM. K674 is covalently cross-linked (Glycyl lysine isopeptide (Lys-Gly) (interchain with G-Cter in SUMO2)). At S677 the chain carries Phosphoserine. K716 is covalently cross-linked (Glycyl lysine isopeptide (Lys-Gly) (interchain with G-Cter in SUMO2)). A Phosphoserine modification is found at S720. Residue S742 is modified to Phosphoserine; by ATM. K778 is covalently cross-linked (Glycyl lysine isopeptide (Lys-Gly) (interchain with G-Cter in SUMO2)). Positions 836 to 838 (FRY) match the KLHL15-binding motif. A phosphothreonine mark is found at T843 and T855. Residue K865 forms a Glycyl lysine isopeptide (Lys-Gly) (interchain with G-Cter in SUMO2) linkage. Positions 869–893 (DLSPRPKRRQPYNAVFSPKGKEQRT) are disordered.

The protein belongs to the COM1/SAE2/CtIP family. Homotetramer; formed by antiparallel association of helical extensions protruding from the N-termini of two parallel coiled-coil dimers. Forms a dumbbell-shaped particle in which polar globular domains are held about 30 nm apart by a central rod. Homotetramerization is required for DNA-end resection and repair. Interacts (via the PXDLS motif) with CTBP1; the interaction is disrupted via binding of the adenovirus E1A to CTBP1. Component of the BRCA1-RBBP8 complex. Interacts (the Ser-326 phosphorylated form) with BRCA1 (via the C-terminal BRCT domains): the interaction occurs in the G2 phase, ubiquitinates RBBP8 and involves RBBP8 in BRCA1-dependent G2/M checkpoint control on DNA damage. Interacts with RB1. Interacts with the MRN complex. Interacts directly with MRE11; the interaction is required for efficient homologous recombination (HR) and regulation of the MRN complex. Interacts (when phosphorylated by CDK1) with NBN; promoting association with the MRN complex. Interacts with LMO4 (via the LIM zinc-binding 1 domain). Interacts with SIAH1. Interacts with RNF138. Interacts with EXD2. Interacts with CUL3 and KLHL15; this interaction leads to RBBP8 proteasomal degradation. Directly interacts with PIN1; this interaction depends upon RBBP8 phosphorylation, predominantly at Thr-315. Interacts with FZR1; this interaction leads to APC/C-mediated RBBP8 proteasomal degradation. Interacts with AUNIP; leading to recruit RBBP8 to sites of DNA damage. Interacts with SAMHD1. Interacts with HDGFL2. Hyperphosphorylation upon ionizing radiation results in dissociation from BRCA1. Phosphorylation at Thr-843 by CDK1 is essential for the recruitment to DNA and the DNA repair function. Phosphorylation at Thr-843 and Thr-855 promote interaction with NBN and recruitment to double-strand breaks (DSBs). Phosphorylated on Ser-326 as cells enter G2 phase. Phosphorylated at Ser-326 as cells enter G2 phase. This phosphorylation is required for binding BRCA1 and for the G2/M DNA damage transition checkpoint control. Phosphorylation at Thr-315 is required for PIN1-binding, while phosphorylation at Ser-276 serves as a PIN1 isomerization site. Phosphorylation at Thr-315 is cell-cycle dependent. It steadily increases during S phase, peaks at late S/G2 phase, and drops at G1. Phosphorylation is not required for tetramerization. Binds to DNA more strongly when dephosphorylated. In terms of processing, ubiquitinated. Ubiquitination at multiple sites by BRCA1 (via its N-terminal RING domain) does not lead to its proteasomal degradation but instead the ubiquitinated RBBP8 binds to chromatin following DNA damage and may play a role in G2/M checkpoint control. Ubiquitinated by RNF138 at its N-terminus. Ubiquitinated through 'Lys-48' by the E3 CUL3-KLHL15 complex; this modification leads to proteasomal degradation. Ubiquitinated by the E3 FZR1/APC/C complex; this modification leads to proteasomal degradation.

Its subcellular location is the nucleus. The protein resides in the chromosome. Endonuclease that cooperates with the MRE11-RAD50-NBN (MRN) complex in DNA-end resection, the first step of double-strand break (DSB) repair through the homologous recombination (HR) pathway. HR is restricted to S and G2 phases of the cell cycle and preferentially repairs DSBs resulting from replication fork collapse. Key determinant of DSB repair pathway choice, as it commits cells to HR by preventing classical non-homologous end-joining (NHEJ). Specifically promotes the endonuclease activity of the MRN complex to clear DNA ends containing protein adducts: recruited to DSBs by NBN following phosphorylation by CDK1, and promotes the endonuclease activity of MRE11 to clear protein-DNA adducts and generate clean double-strand break ends. Functions downstream of the MRN complex and ATM, promotes ATR activation and its recruitment to DSBs in the S/G2 phase facilitating the generation of ssDNA. Component of the BRCA1-RBBP8 complex that regulates CHEK1 activation and controls cell cycle G2/M checkpoints on DNA damage. During immunoglobulin heavy chain class-switch recombination, promotes microhomology-mediated alternative end joining (A-NHEJ) and plays an essential role in chromosomal translocations. Binds preferentially to DNA Y-junctions and to DNA substrates with blocked ends and promotes intermolecular DNA bridging. The sequence is that of DNA endonuclease RBBP8 (Rbbp8) from Mus musculus (Mouse).